The sequence spans 738 residues: Multifunctional procollagen lysine hydroxylase and glycosyltransferase LH3 (738 aa).

The signal sequence occupies residues M1 to A24. Residues S25 to P290 form a required for glycosyltransferase activity region. V44 to T46 serves as a coordination point for UDP. N-linked (GlcNAc...) asparagine glycosylation occurs at N63. Residues D112, D115, and H253 each contribute to the Mn(2+) site. Residue D112–Y114 participates in UDP binding. G256–K259 is a UDP binding site. 2 disulfides stabilise this stretch: C279/C282 and C379/C385. The interval P295–R520 is accessory region. The N-linked (GlcNAc...) asparagine glycan is linked to N548. The cysteines at positions 563 and 698 are disulfide-linked. The 2-oxoglutarate site is built by R599 and Y656. Residues R647–P738 form the Fe2OG dioxygenase domain. 2 residues coordinate Fe cation: H667 and D669. Positions T672–L715 are important for dimerization. N676 provides a ligand contact to 2-oxoglutarate. H719 is a binding site for Fe cation. 2-oxoglutarate is bound at residue R729.

Homodimer. Requires Fe(2+) as cofactor. The cofactor is L-ascorbate. Mn(2+) is required as a cofactor.

It is found in the rough endoplasmic reticulum. Its subcellular location is the endoplasmic reticulum lumen. The protein resides in the endoplasmic reticulum membrane. The protein localises to the secreted. It localises to the extracellular space. The enzyme catalyses L-lysyl-[collagen] + 2-oxoglutarate + O2 = (5R)-5-hydroxy-L-lysyl-[collagen] + succinate + CO2. It carries out the reaction (5R)-5-hydroxy-L-lysyl-[collagen] + UDP-alpha-D-galactose = (5R)-5-O-(beta-D-galactosyl)-5-hydroxy-L-lysyl-[collagen] + UDP + H(+). It catalyses the reaction (5R)-5-O-(beta-D-galactosyl)-5-hydroxy-L-lysyl-[collagen] + UDP-alpha-D-glucose = (5R)-5-O-[alpha-D-glucosyl-(1-&gt;2)-beta-D-galactosyl]-5-hydroxy-L-lysyl-[collagen] + UDP + H(+). In terms of biological role, multifunctional enzyme that catalyzes a series of post-translational modifications on Lys residues in procollagen. Plays a redundant role in catalyzing the formation of hydroxylysine residues in -Xaa-Lys-Gly- sequences in collagens. Plays a redundant role in catalyzing the transfer of galactose onto hydroxylysine groups, giving rise to galactosyl 5-hydroxylysine. Has an essential role by catalyzing the subsequent transfer of glucose moieties, giving rise to 1,2-glucosylgalactosyl-5-hydroxylysine residues. Catalyzes hydroxylation and glycosylation of Lys residues in the MBL1 collagen-like domain, giving rise to hydroxylysine and 1,2-glucosylgalactosyl-5-hydroxylysine residues. Catalyzes hydroxylation and glycosylation of Lys residues in the ADIPOQ collagen-like domain, giving rise to hydroxylysine and 1,2-glucosylgalactosyl-5-hydroxylysine residues. Essential for normal biosynthesis and secretion of type IV collagens. Essential for normal formation of basement membranes. The chain is Multifunctional procollagen lysine hydroxylase and glycosyltransferase LH3 (PLOD3) from Pongo abelii (Sumatran orangutan).